Reading from the N-terminus, the 351-residue chain is Protein MSS2, mitochondrial (351 aa).

2 TPR repeats span residues histidine 155–threonine 188 and lysine 260–glutamate 294.

As to quaternary structure, interacts with COX18.

It localises to the mitochondrion inner membrane. Required to stabilize mitochondrial cytochrome C oxidase subunit 2 (COX2) and to translocate the C-terminal domain of COX2 through the inner membrane. In Saccharomyces cerevisiae (strain ATCC 204508 / S288c) (Baker's yeast), this protein is Protein MSS2, mitochondrial (MSS2).